A 343-amino-acid polypeptide reads, in one-letter code: Ornithine carbamoyltransferase, catabolic (343 aa).

Ser-62–Thr-65 serves as a coordination point for carbamoyl phosphate. His-79 serves as a coordination point for Ni(2+). Carbamoyl phosphate contacts are provided by residues Gln-89, Arg-113, and His-140–Gln-143. Residues Asn-172, Asp-236, and Ser-240 to Met-241 contribute to the L-ornithine site. Carbamoyl phosphate is bound by residues Cys-278–Leu-279 and Arg-323.

It belongs to the aspartate/ornithine carbamoyltransferase superfamily. OTCase family. In terms of assembly, homohexamer; dimer of trimers. The cofactor is Ni(2+).

It is found in the cytoplasm. It carries out the reaction carbamoyl phosphate + L-ornithine = L-citrulline + phosphate + H(+). Its pathway is amino-acid degradation; L-arginine degradation via ADI pathway; carbamoyl phosphate from L-arginine: step 2/2. Its function is as follows. Involved in the catabolism of arginine. Catalyzes the phosphorolysis of citrulline, the reverse reaction of the biosynthetic one, yielding ornithine and carbamoyl phosphate which serve to generate ATP from ADP. The sequence is that of Ornithine carbamoyltransferase, catabolic from Lentilactobacillus hilgardii (Lactobacillus hilgardii).